The chain runs to 335 residues: Tryptophan--tRNA ligase (335 aa).

ATP is bound by residues 11–13 (QPT) and 19–20 (GN). The 'HIGH' region signature appears at 12–20 (PTGNLHLGN). L-tryptophan is bound at residue Asp-135. Residues 147-149 (GED), Val-189, and 198-202 (KMSKS) contribute to the ATP site. A 'KMSKS' region motif is present at residues 198 to 202 (KMSKS).

It belongs to the class-I aminoacyl-tRNA synthetase family. As to quaternary structure, homodimer.

Its subcellular location is the cytoplasm. The catalysed reaction is tRNA(Trp) + L-tryptophan + ATP = L-tryptophyl-tRNA(Trp) + AMP + diphosphate + H(+). In terms of biological role, catalyzes the attachment of tryptophan to tRNA(Trp). The sequence is that of Tryptophan--tRNA ligase from Nostoc sp. (strain PCC 7120 / SAG 25.82 / UTEX 2576).